We begin with the raw amino-acid sequence, 269 residues long: Diaminopimelate epimerase (269 aa).

Residues asparagine 15, glutamine 49, and asparagine 66 each coordinate substrate. Residue cysteine 75 is the Proton donor of the active site. Residues 76–77 (GN), asparagine 155, asparagine 187, and 204–205 (ER) contribute to the substrate site. Cysteine 213 acts as the Proton acceptor in catalysis. Residue 214–215 (GS) coordinates substrate.

Belongs to the diaminopimelate epimerase family. Homodimer.

Its subcellular location is the cytoplasm. The catalysed reaction is (2S,6S)-2,6-diaminopimelate = meso-2,6-diaminopimelate. It participates in amino-acid biosynthesis; L-lysine biosynthesis via DAP pathway; DL-2,6-diaminopimelate from LL-2,6-diaminopimelate: step 1/1. Functionally, catalyzes the stereoinversion of LL-2,6-diaminopimelate (L,L-DAP) to meso-diaminopimelate (meso-DAP), a precursor of L-lysine and an essential component of the bacterial peptidoglycan. This is Diaminopimelate epimerase from Rickettsia canadensis (strain McKiel).